The primary structure comprises 248 residues: Putative homeobox-leucine zipper protein HOX26 (248 aa).

Residues 50–118 (KKVAAAAVVA…GDEEGASRKK (69 aa)) form a disordered region. Residues 79–89 (RQRRSCKKGRR) are compositionally biased toward basic residues. The segment at residues 114–173 (ASRKKLRLTGEQATLLEDSFRAHNILSHAEKQELAGKLGLSARQVEVWFQNRRARTKLKQ) is a DNA-binding region (homeobox). The segment at 172–216 (KQTEADCDLLRRWCDHLAADNARLRRDLAELRRSSSSPPVSGLAV) is leucine-zipper.

Belongs to the HD-ZIP homeobox family. Class II subfamily.

It is found in the nucleus. Functionally, probable transcription factor. The chain is Putative homeobox-leucine zipper protein HOX26 (HOX26) from Oryza sativa subsp. japonica (Rice).